Reading from the N-terminus, the 270-residue chain is Phosphatidylglycerol--prolipoprotein diacylglyceryl transferase (270 aa).

Transmembrane regions (helical) follow at residues 18-38 (ITIY…LWLA), 55-75 (LVLF…VLFE), 90-110 (WQGG…GAVF), and 115-135 (GLSF…GQAI). Residue Arg137 participates in a 1,2-diacyl-sn-glycero-3-phospho-(1'-sn-glycerol) binding. The next 3 helical transmembrane spans lie at 177–197 (HPTF…LLWL), 205–225 (GELF…IEGM), and 236–256 (LRAA…LWIV).

This sequence belongs to the Lgt family.

The protein localises to the cell membrane. The catalysed reaction is L-cysteinyl-[prolipoprotein] + a 1,2-diacyl-sn-glycero-3-phospho-(1'-sn-glycerol) = an S-1,2-diacyl-sn-glyceryl-L-cysteinyl-[prolipoprotein] + sn-glycerol 1-phosphate + H(+). The protein operates within protein modification; lipoprotein biosynthesis (diacylglyceryl transfer). In terms of biological role, catalyzes the transfer of the diacylglyceryl group from phosphatidylglycerol to the sulfhydryl group of the N-terminal cysteine of a prolipoprotein, the first step in the formation of mature lipoproteins. This chain is Phosphatidylglycerol--prolipoprotein diacylglyceryl transferase, found in Geobacillus kaustophilus (strain HTA426).